The following is a 125-amino-acid chain: Fluoride-specific ion channel FluC (125 aa).

The next 4 helical transmembrane spans lie at Phe-7–Val-27, Gly-36–Ser-56, Pro-63–Phe-83, and Phe-96–Cys-116. Na(+)-binding residues include Gly-75 and Thr-78.

Belongs to the fluoride channel Fluc/FEX (TC 1.A.43) family.

The protein resides in the cell inner membrane. The catalysed reaction is fluoride(in) = fluoride(out). With respect to regulation, na(+) is not transported, but it plays an essential structural role and its presence is essential for fluoride channel function. Functionally, fluoride-specific ion channel. Important for reducing fluoride concentration in the cell, thus reducing its toxicity. The polypeptide is Fluoride-specific ion channel FluC (Elusimicrobium minutum (strain Pei191)).